Here is a 117-residue protein sequence, read N- to C-terminus: Conotoxin vil14a (117 aa).

The signal sequence occupies residues 1–22; the sequence is MGFRVLVLVVMATTSALPFTFS. Positions 23–90 are excised as a propeptide; sequence EEPGRSPFRP…FAETPVGQKR (68 aa). Residues 53–86 form a disordered region; the sequence is RADGQPPDMRQPEMRRPEMRRPEVRQPEFAETPV. The span at 62–80 shows a compositional bias: basic and acidic residues; that stretch reads RQPEMRRPEMRRPEVRQPE. 2 cysteine pairs are disulfide-bonded: Cys96–Cys116 and Cys100–Cys112.

The protein belongs to the conotoxin R superfamily. Expressed by the venom duct.

The protein localises to the secreted. The sequence is that of Conotoxin vil14a from Conus villepinii (Villepin's cone).